Consider the following 70-residue polypeptide: DNA gyrase inhibitor YacG (70 aa).

Residues Cys-21, Cys-24, Cys-36, and Cys-40 each coordinate Zn(2+).

It belongs to the DNA gyrase inhibitor YacG family. As to quaternary structure, interacts with GyrB. Zn(2+) serves as cofactor.

Functionally, inhibits all the catalytic activities of DNA gyrase by preventing its interaction with DNA. Acts by binding directly to the C-terminal domain of GyrB, which probably disrupts DNA binding by the gyrase. In Sinorhizobium medicae (strain WSM419) (Ensifer medicae), this protein is DNA gyrase inhibitor YacG.